The following is a 378-amino-acid chain: MRKTEKMKRPHNSSHVKQEERADDSHSNSPASSKSIKQENLLKCELCSTVCSSISQLQSHTLSEHVPEKKPSISTSNSAPSTKRVACQQCEDTFEDFAQFAIHMKSHLSSVTSQLFFCPICPVGTPFRDKKSQLEHLTTQHLQIQVTQHICSICDSAFPSPQAQSVHFAEAHKKYSCTNCDFETENEKTFKEHSKQHSRQLIMYGCALCATSYPSQLHLITHVQMSHDQETFYPPSLPIPTPPSPKSTPKQRVLQCSVCDESVLGEDGLDEHRLRKHCKVRFADKCADCQEPLLNETSFVEHCLRHSKDHAHHCPVCRQSLRSDSQIHAHCAYHMSHQDSTSSTSSSPITNGFSFVCPICGEKLDDGFALIEHTKIHL.

Residues 1-14 are compositionally biased toward basic residues; that stretch reads MRKTEKMKRPHNSS. Disordered stretches follow at residues 1–36 and 61–80; these read MRKT…SKSI and TLSE…NSAP. 2 stretches are compositionally biased toward basic and acidic residues: residues 16–26 and 62–71; these read VKQEERADDSH and LSEHVPEKKP. Residues 42-65 form a C2H2-type 1 zinc finger; it reads LKCELCSTVCSSISQLQSHTLSEH. Residues 85–107 form a C2H2-type 2; degenerate zinc finger; sequence VACQQCEDTFEDFAQFAIHMKSH. Residues 204–226 form a C2H2-type 3; degenerate zinc finger; it reads YGCALCATSYPSQLHLITHVQMS. The tract at residues 231 to 250 is disordered; it reads TFYPPSLPIPTPPSPKSTPK. Residues 235–246 show a composition bias toward pro residues; it reads PSLPIPTPPSPK. C2H2-type zinc fingers lie at residues 254–277, 284–306, 312–334, and 355–377; these read LQCS…LRKH, DKCA…CLRH, HHCP…CAYH, and FVCP…TKIH.

It is found in the nucleus. This chain is Putative zinc finger protein C09F5.3, found in Caenorhabditis elegans.